Consider the following 853-residue polypeptide: Guanine nucleotide exchange protein smcr8a (853 aa).

The uDENN FLCN/SMCR8-type domain maps to Thr-47–Asn-219. Disordered regions lie at residues Pro-272–Ser-298 and Leu-418–Ser-454. Residues Asp-280–Ser-298 show a composition bias toward polar residues. Positions Arg-316 to Thr-753 constitute a cDENN FLCN/SMCR8-type domain. The segment covering Gly-421–Ser-432 has biased composition (low complexity). The span at Thr-433–Ser-454 shows a compositional bias: polar residues. Residues Phe-762–Lys-826 form the dDENN FLCN/SMCR8-type domain.

The protein belongs to the SMCR8 family. Component of the C9orf72-SMCR8 complex. The C9orf72-SMCR8 complex associates with the ATG1/ULK1 kinase complex.

Its subcellular location is the cytoplasm. It is found in the nucleus. Component of the C9orf72-SMCR8 complex, a complex that has guanine nucleotide exchange factor (GEF) activity and regulates autophagy. In the complex, C9orf72 and SMCR8 probably constitute the catalytic subunits that promote the exchange of GDP to GTP, converting inactive GDP-bound RAB8A and RAB39B into their active GTP-bound form, thereby promoting autophagosome maturation. The C9orf72-SMCR8 complex also acts as a negative regulator of autophagy initiation by interacting with the ATG1/ULK1 kinase complex and inhibiting its protein kinase activity. This is Guanine nucleotide exchange protein smcr8a (smcr8a) from Danio rerio (Zebrafish).